Reading from the N-terminus, the 350-residue chain is Biotin synthase (350 aa).

Positions 38 to 256 (NHVQVSTLLS…IAVARIMMPK (219 aa)) constitute a Radical SAM core domain. Positions 53, 57, and 60 each coordinate [4Fe-4S] cluster. Residues cysteine 97, cysteine 128, cysteine 188, and arginine 260 each coordinate [2Fe-2S] cluster.

It belongs to the radical SAM superfamily. Biotin synthase family. In terms of assembly, homodimer. It depends on [4Fe-4S] cluster as a cofactor. [2Fe-2S] cluster is required as a cofactor.

The catalysed reaction is (4R,5S)-dethiobiotin + (sulfur carrier)-SH + 2 reduced [2Fe-2S]-[ferredoxin] + 2 S-adenosyl-L-methionine = (sulfur carrier)-H + biotin + 2 5'-deoxyadenosine + 2 L-methionine + 2 oxidized [2Fe-2S]-[ferredoxin]. Its pathway is cofactor biosynthesis; biotin biosynthesis; biotin from 7,8-diaminononanoate: step 2/2. Functionally, catalyzes the conversion of dethiobiotin (DTB) to biotin by the insertion of a sulfur atom into dethiobiotin via a radical-based mechanism. The chain is Biotin synthase from Vibrio cholerae serotype O1 (strain ATCC 39541 / Classical Ogawa 395 / O395).